The sequence spans 1673 residues: Calmodulin-binding transcription activator 1 (1673 aa).

Residues 63–188 (KCSSLPKERH…YLNVPAIEDC (126 aa)) constitute a DNA-binding region (CG-1). The Nuclear localization signal motif lies at 112–119 (RKKVKYRK). The interval 283–375 (HRIISPKVEP…LNSDPDMVDS (93 aa)) is disordered. Over residues 302–313 (EVQHNDVSEGKH) the composition is skewed to basic and acidic residues. A compositionally biased stretch (polar residues) spans 337–367 (HQSSTEVSSTNQVEVPDTTQSSPVSISSGLN). The region spanning 875 to 953 (DYSPEWSYPE…ISNSVVFEYK (79 aa)) is the IPT/TIG domain. The disordered stretch occupies residues 990 to 1021 (MAEMTGSQQHKQASGGGSSGGGSGSGNGGSQA). Residues 1003-1018 (SGGGSSGGGSGSGNGG) are compositionally biased toward gly residues. ANK repeat units lie at residues 1064–1093 (RGMT…KHAD), 1109–1129 (FSCT…AVVL), and 1143–1172 (LGRL…DEQA). Disordered regions lie at residues 1215 to 1246 (ASTN…PKKH) and 1264 to 1317 (ALSL…GSQP). Over residues 1273–1289 (RKQSPSSKQSVPETLSP) the composition is skewed to polar residues. IQ domains follow at residues 1547–1576 (QEVA…AAIL), 1577–1599 (IQSK…AAVL), and 1600–1622 (IQKY…TAVI).

This sequence belongs to the CAMTA family. In terms of assembly, may interact with calmodulin. In terms of tissue distribution, normally expressed in non-neoplastic adult central nervous system tissues: detected in whole brain, cerebellum, brain cortex, occipital lobe, frontal lobe, temporal lobe, putamen. Expression levels are low in oligodendroglial tumors, and are reduced by half in oligodendroglioma and astrocytoma cases with 1p loss of heterozygosity. Detected in neuroblastic-type cultured neuroblastoma cells. Expressed in heart and kidney.

Its subcellular location is the nucleus. It is found in the cytoplasm. Transcriptional activator. The chain is Calmodulin-binding transcription activator 1 from Homo sapiens (Human).